The following is a 117-amino-acid chain: Ig heavy chain V region 5-84 (117 aa).

The signal sequence occupies residues 1 to 19; that stretch reads MNFGLSLIFLVLVLKGVLC. Residues 20-49 are framework-1; that stretch reads EVKLVESGGGLVQPGGSLKLSCAASGFTFS. A disulfide bridge links cysteine 41 with cysteine 115. The segment at 50–54 is complementarity-determining-1; that stretch reads SYTMS. Positions 55–68 are framework-2; the sequence is WVRQTPEKRLEWVA. Residues 69 to 85 form a complementarity-determining-2 region; that stretch reads YISNGGGSTYYPDTVKG. Residues 86 to 117 form a framework-3 region; that stretch reads RFTISRDNAKNNLYLQMSSLKSEDTAMYYCAR.

The sequence is that of Ig heavy chain V region 5-84 from Mus musculus (Mouse).